Here is a 348-residue protein sequence, read N- to C-terminus: Haptoglobin-related protein (348 aa).

Residues 1–18 (MSDLGAVISLLLWGRQLF) constitute a signal peptide (not cleaved). Residues 34–87 (FPKPPEIANGYVEHLFRYQCKNYYRLRTEGDGVYTLNDKKQWINKAVGDKLPEC) enclose the Sushi domain. A Peptidase S1 domain is found at 104–346 (ILGGHLDAKG…IQHWVQKTIA (243 aa)). 2 cysteine pairs are disulfide-bonded: C251–C282 and C293–C323.

It belongs to the peptidase S1 family. In adult liver the amount of HPR mRNA is at the lower limit of detection, therefore the extent of its expression is at most less than 1000-fold that of the HP1F gene. No HPR mRNA can be detected in fetal liver. Expressed in Hep-G2 and leukemia MOLT-4 cell lines.

It is found in the secreted. In terms of biological role, primate-specific plasma protein associated with apolipoprotein L-I (apoL-I)-containing high-density lipoprotein (HDL). This HDL particle, termed trypanosome lytic factor-1 (TLF-1), mediates human innate immune protection against many species of African trypanosomes. Binds hemoglobin with high affinity and may contribute to the clearance of cell-free hemoglobin to allow hepatic recycling of heme iron. The polypeptide is Haptoglobin-related protein (HPR) (Homo sapiens (Human)).